The primary structure comprises 449 residues: Dynein regulatory complex protein 10 (449 aa).

Residues 90 to 125 are a coiled coil; sequence AVREHEDLCQVLLENVRCLKEKERQLQEQKEAEEEG. Positions 400–429 constitute an IQ domain; sequence MVRAATLIQALWKGYLVRSLLRSKKKRGKG. Residues 422–449 are disordered; it reads SKKKRGKGKAKDKEKGKQKGKEKGKGKK. The span at 430 to 449 shows a compositional bias: basic and acidic residues; that stretch reads KAKDKEKGKQKGKEKGKGKK.

This sequence belongs to the DRC10 family. Component of the nexin-dynein regulatory complex (N-DRC). Interacts with CFAP52.

The protein resides in the cytoplasm. Its subcellular location is the cytoskeleton. It localises to the flagellum axoneme. Its function is as follows. Component of the nexin-dynein regulatory complex (N-DRC), a key regulator of ciliary/flagellar motility which maintains the alignment and integrity of the distal axoneme and regulates microtubule sliding in motile axonemes. The polypeptide is Dynein regulatory complex protein 10 (IQCD) (Homo sapiens (Human)).